A 535-amino-acid chain; its full sequence is Mannan polymerase I complex VAN1 subunit (535 aa).

The Cytoplasmic segment spans residues Met-1–Val-64. Residues Leu-22–Lys-48 are disordered. Residue Ser-25 is modified to Phosphoserine. Residues Ser-65–Ile-81 traverse the membrane as a helical; Signal-anchor for type II membrane protein segment. The Lumenal segment spans residues Ser-82–Glu-535. N-linked (GlcNAc...) asparagine glycosylation is found at Asn-215 and Asn-251.

The protein belongs to the ANP1/MMN9/VAN1 family. As to quaternary structure, component of the M-Pol I complex which contains MNN9 and VAN1. Glycosylated.

The protein resides in the endoplasmic reticulum membrane. Its subcellular location is the golgi apparatus membrane. In terms of biological role, involved in regulation of the phosphorylation of a number of proteins, some of which appear to be important in cell growth control. The M-Pol I complex possesses alpha-1,6-mannosyltransferase activity and is probably involved in the elongation of the mannan backbone of N-linked glycans on cell wall and periplasmic proteins. The chain is Mannan polymerase I complex VAN1 subunit (VAN1) from Saccharomyces cerevisiae (strain ATCC 204508 / S288c) (Baker's yeast).